The following is a 396-amino-acid chain: S-adenosylmethionine synthase (396 aa).

H16 contributes to the ATP binding site. D18 lines the Mg(2+) pocket. Residue E44 coordinates K(+). 2 residues coordinate L-methionine: E57 and Q100. The segment at 100–110 (QSVDIAQGVDR) is flexible loop. ATP-binding positions include 165–167 (DAK), 231–232 (KF), D240, 246–247 (RK), A263, and K267. D240 is a binding site for L-methionine. Position 271 (K271) interacts with L-methionine.

This sequence belongs to the AdoMet synthase family. As to quaternary structure, homotetramer; dimer of dimers. Mg(2+) is required as a cofactor. K(+) serves as cofactor.

Its subcellular location is the cytoplasm. The catalysed reaction is L-methionine + ATP + H2O = S-adenosyl-L-methionine + phosphate + diphosphate. The protein operates within amino-acid biosynthesis; S-adenosyl-L-methionine biosynthesis; S-adenosyl-L-methionine from L-methionine: step 1/1. Functionally, catalyzes the formation of S-adenosylmethionine (AdoMet) from methionine and ATP. The overall synthetic reaction is composed of two sequential steps, AdoMet formation and the subsequent tripolyphosphate hydrolysis which occurs prior to release of AdoMet from the enzyme. The protein is S-adenosylmethionine synthase of Marinobacter nauticus (strain ATCC 700491 / DSM 11845 / VT8) (Marinobacter aquaeolei).